Consider the following 344-residue polypeptide: uncharacterized protein (344 aa).

Residues 304–344 are disordered; the sequence is AVPAPTPRRPLDSVLQIRQTPEKGRNASDRNARETGWFSPP. The segment covering 323 to 336 has biased composition (basic and acidic residues); the sequence is TPEKGRNASDRNAR.

This is an uncharacterized protein from Mycobacterium tuberculosis (strain CDC 1551 / Oshkosh).